Consider the following 824-residue polypeptide: AMP deaminase 2 (824 aa).

The disordered stretch occupies residues 1 to 43 (MASYPGPGKSKAKYPFKKRAGLQASAAAPEARSGLGASPLQSA). A compositionally biased stretch (basic residues) spans 10–20 (SKAKYPFKKRA). Omega-N-methylarginine is present on R44. S45, S63, and S79 each carry phosphoserine. A Phosphotyrosine modification is found at Y90. 2 positions are modified to phosphoserine: S96 and S113. T133 is modified (phosphothreonine). Phosphoserine occurs at positions 135 and 137. Residues H364 and H366 each coordinate Zn(2+). Residues H366 and 435–440 (KFNAKY) contribute to the substrate site. H633 contacts Zn(2+). Substrate is bound at residue E636. H655 (proton acceptor) is an active-site residue. D710 lines the Zn(2+) pocket. Residue 711–714 (DPLQ) coordinates substrate.

It belongs to the metallo-dependent hydrolases superfamily. Adenosine and AMP deaminases family. In terms of assembly, homotetramer. The cofactor is Zn(2+).

It catalyses the reaction AMP + H2O + H(+) = IMP + NH4(+). The protein operates within purine metabolism; IMP biosynthesis via salvage pathway; IMP from AMP: step 1/1. AMP deaminase plays a critical role in energy metabolism. Catalyzes the deamination of AMP to IMP and plays an important role in the purine nucleotide cycle. In Mus musculus (Mouse), this protein is AMP deaminase 2.